A 286-amino-acid chain; its full sequence is Polyamine aminopropyltransferase (286 aa).

The 235-residue stretch at 1–235 (MSDYQETLYE…GAMTFAWGAT (235 aa)) folds into the PABS domain. S-methyl-5'-thioadenosine is bound at residue Gln-30. Spermidine is bound by residues His-61 and Asp-85. S-methyl-5'-thioadenosine-binding positions include Glu-105 and 137–138 (DG). Residue Asp-155 is the Proton acceptor of the active site. 155-158 (DSTD) is a binding site for spermidine. Residue Pro-162 coordinates S-methyl-5'-thioadenosine.

This sequence belongs to the spermidine/spermine synthase family. Homodimer or homotetramer.

It is found in the cytoplasm. It carries out the reaction S-adenosyl 3-(methylsulfanyl)propylamine + putrescine = S-methyl-5'-thioadenosine + spermidine + H(+). The protein operates within amine and polyamine biosynthesis; spermidine biosynthesis; spermidine from putrescine: step 1/1. In terms of biological role, catalyzes the irreversible transfer of a propylamine group from the amino donor S-adenosylmethioninamine (decarboxy-AdoMet) to putrescine (1,4-diaminobutane) to yield spermidine. This Pseudomonas syringae pv. tomato (strain ATCC BAA-871 / DC3000) protein is Polyamine aminopropyltransferase.